The sequence spans 98 residues: Beta-elicitin cinnamomin (98 aa).

3 cysteine pairs are disulfide-bonded: Cys-3/Cys-71, Cys-27/Cys-56, and Cys-51/Cys-95. The Beak-like motif 1 (ligand binding) signature appears at 33–42; sequence YSMLTATALP. A Beak-like motif 2 (ligand binding) motif is present at residues 72 to 83; that stretch reads DLTVPTSGLVLD.

The protein belongs to the elicitin family.

It is found in the secreted. In terms of biological role, induces local and distal defense responses (incompatible hypersensitive reaction) in plants from the solanaceae and cruciferae families. Elicits leaf necrosis and causes the accumulation of pathogenesis-related proteins. Might interact with the lipidic molecules of the plasma membrane. Elicitins are able to load, carry, and transfer sterols between membranes. The sequence is that of Beta-elicitin cinnamomin from Phytophthora cinnamomi (Cinnamon fungus).